A 393-amino-acid chain; its full sequence is Peptidyl-prolyl cis-trans isomerase CYP7 (393 aa).

Positions 8–196 (YLDISIDKKP…SDVRISDCGV (189 aa)) constitute a PPIase cyclophilin-type domain. 3 TPR repeats span residues 240–273 (ANII…INEY), 292–325 (MKIY…DNVP), and 330–363 (AKAY…NPDD).

Interacts with RPD3 and CNS1.

It carries out the reaction [protein]-peptidylproline (omega=180) = [protein]-peptidylproline (omega=0). Functionally, PPIases accelerate the folding of proteins. It catalyzes the cis-trans isomerization of proline imidic peptide bonds in oligopeptides. Plays a major role in negative regulation of the heat shock transcription factor (HSF). The chain is Peptidyl-prolyl cis-trans isomerase CYP7 (CPR7) from Saccharomyces cerevisiae (strain ATCC 204508 / S288c) (Baker's yeast).